Reading from the N-terminus, the 178-residue chain is Large ribosomal subunit protein uL6 (178 aa).

It belongs to the universal ribosomal protein uL6 family. Part of the 50S ribosomal subunit.

In terms of biological role, this protein binds to the 23S rRNA, and is important in its secondary structure. It is located near the subunit interface in the base of the L7/L12 stalk, and near the tRNA binding site of the peptidyltransferase center. The protein is Large ribosomal subunit protein uL6 of Aliarcobacter butzleri (strain RM4018) (Arcobacter butzleri).